The primary structure comprises 472 residues: ATP synthase subunit beta (472 aa).

155 to 162 is a binding site for ATP; the sequence is GGAGVGKT.

This sequence belongs to the ATPase alpha/beta chains family. In terms of assembly, F-type ATPases have 2 components, CF(1) - the catalytic core - and CF(0) - the membrane proton channel. CF(1) has five subunits: alpha(3), beta(3), gamma(1), delta(1), epsilon(1). CF(0) has three main subunits: a(1), b(2) and c(9-12). The alpha and beta chains form an alternating ring which encloses part of the gamma chain. CF(1) is attached to CF(0) by a central stalk formed by the gamma and epsilon chains, while a peripheral stalk is formed by the delta and b chains.

It is found in the cell membrane. It catalyses the reaction ATP + H2O + 4 H(+)(in) = ADP + phosphate + 5 H(+)(out). In terms of biological role, produces ATP from ADP in the presence of a proton gradient across the membrane. The catalytic sites are hosted primarily by the beta subunits. This Fervidobacterium islandicum protein is ATP synthase subunit beta.